The following is a 267-amino-acid chain: Formamidopyrimidine-DNA glycosylase (267 aa).

Pro-2 acts as the Schiff-base intermediate with DNA in catalysis. The active-site Proton donor is Glu-3. The Proton donor; for beta-elimination activity role is filled by Lys-58. Residues His-91, Arg-110, and Arg-152 each coordinate DNA. The FPG-type zinc finger occupies 233–267; sequence DVYGRGHGTCTSCGGALEAVRLGNRSTVFCPRCQQ. Arg-257 (proton donor; for delta-elimination activity) is an active-site residue.

It belongs to the FPG family. Monomer. The cofactor is Zn(2+).

The enzyme catalyses Hydrolysis of DNA containing ring-opened 7-methylguanine residues, releasing 2,6-diamino-4-hydroxy-5-(N-methyl)formamidopyrimidine.. It catalyses the reaction 2'-deoxyribonucleotide-(2'-deoxyribose 5'-phosphate)-2'-deoxyribonucleotide-DNA = a 3'-end 2'-deoxyribonucleotide-(2,3-dehydro-2,3-deoxyribose 5'-phosphate)-DNA + a 5'-end 5'-phospho-2'-deoxyribonucleoside-DNA + H(+). Its function is as follows. Involved in base excision repair of DNA damaged by oxidation or by mutagenic agents. Acts as a DNA glycosylase that recognizes and removes damaged bases. Has a preference for oxidized purines, such as 7,8-dihydro-8-oxoguanine (8-oxoG). Has AP (apurinic/apyrimidinic) lyase activity and introduces nicks in the DNA strand. Cleaves the DNA backbone by beta-delta elimination to generate a single-strand break at the site of the removed base with both 3'- and 5'-phosphates. This chain is Formamidopyrimidine-DNA glycosylase, found in Pelobacter propionicus (strain DSM 2379 / NBRC 103807 / OttBd1).